Consider the following 393-residue polypeptide: NAD(P)H-quinone oxidoreductase subunit H, chloroplastic (393 aa).

This sequence belongs to the complex I 49 kDa subunit family. As to quaternary structure, NDH is composed of at least 16 different subunits, 5 of which are encoded in the nucleus.

Its subcellular location is the plastid. It localises to the chloroplast thylakoid membrane. It carries out the reaction a plastoquinone + NADH + (n+1) H(+)(in) = a plastoquinol + NAD(+) + n H(+)(out). It catalyses the reaction a plastoquinone + NADPH + (n+1) H(+)(in) = a plastoquinol + NADP(+) + n H(+)(out). NDH shuttles electrons from NAD(P)H:plastoquinone, via FMN and iron-sulfur (Fe-S) centers, to quinones in the photosynthetic chain and possibly in a chloroplast respiratory chain. The immediate electron acceptor for the enzyme in this species is believed to be plastoquinone. Couples the redox reaction to proton translocation, and thus conserves the redox energy in a proton gradient. The sequence is that of NAD(P)H-quinone oxidoreductase subunit H, chloroplastic from Zea mays (Maize).